A 1141-amino-acid polypeptide reads, in one-letter code: cGMP-inhibited 3',5'-cyclic phosphodiesterase 3A (1141 aa).

Positions 1–41 (MAVRGEAAQDWAKPGLRGPSPAPVARGDHRCRGGSPSSPRG) are disordered. A helical membrane pass occupies residues 62–82 (SALCAGSLSVLLALLVRLVGG). The disordered stretch occupies residues 89–111 (ESSQEAAAEEEEEEGARGGVFPG). 5 helical membrane passes run 127–147 (LQPA…GLCL), 157–177 (AVAL…SLGV), 182–202 (LLSL…TWLV), 207–227 (LGVL…VSLE), and 229–249 (FKVA…LLLA). A disordered region spans residues 262 to 309 (PAPPRERFGSQSSARTKEEIPGWKRRRRSSSVVAGEMSGCGGKSHRRT). Serine 310 is modified (phosphoserine). Residues 433–445 (RVSSTWTTTTSAT) are compositionally biased toward low complexity. The tract at residues 433 to 479 (RVSSTWTTTTSATGLPTLEPAPVRRDRSASIKPHEAPSPSAVNPDSW) is disordered. Positions 454 to 467 (PVRRDRSASIKPHE) are enriched in basic and acidic residues. A phosphoserine mark is found at serine 492, serine 520, serine 524, and serine 533. The disordered stretch occupies residues 504–643 (HVKAKKQNRP…SDILQNDEEA (140 aa)). Pro residues predominate over residues 522-532 (VPSPSSSPPQG). Residues 618–637 (TSQVTSDYETNNNSDSSDIL) are compositionally biased toward polar residues. Residues 669–1141 (KPILAPEPLV…EETLAPQPDL (473 aa)) form an interaction with SLFN12 region. Positions 674–1093 (PEPLVMDNLD…MMWKKVIEEE (420 aa)) constitute a PDEase domain. The active-site Proton donor is histidine 752. Histidine 752 serves as a coordination point for AMP. Residues histidine 756, histidine 836, aspartate 837, and aspartate 950 each contribute to the Mn(2+) site. Residues aspartate 837, aspartate 950, and glutamine 1001 each coordinate AMP. Aspartate 837 contacts Mg(2+). Disordered regions lie at residues 1024 to 1062 (GKWV…EAPR) and 1098 to 1141 (GTEN…QPDL). Over residues 1029 to 1046 (DSDDSGDTDDPEEEEEEA) the composition is skewed to acidic residues. At serine 1033 the chain carries Phosphoserine. At threonine 1036 the chain carries Phosphothreonine. The segment covering 1098–1113 (GTENQAPDQAPLQHSS) has biased composition (polar residues). A Glycyl lysine isopeptide (Lys-Gly) (interchain with G-Cter in SUMO2) cross-link involves residue lysine 1120.

The protein belongs to the cyclic nucleotide phosphodiesterase family. PDE3 subfamily. In terms of assembly, homodimer. Interacts with PDE3A; direct low affinity interaction which is stimulated by binding of 17beta-estradiol/E2 to PDE3A and that positively regulates the ribonuclease activity of SLFN12. It depends on Mn(2+) as a cofactor. The cofactor is Mg(2+).

The protein resides in the membrane. The protein localises to the cytoplasm. Its subcellular location is the cytosol. It catalyses the reaction a nucleoside 3',5'-cyclic phosphate + H2O = a nucleoside 5'-phosphate + H(+). The enzyme catalyses 3',5'-cyclic AMP + H2O = AMP + H(+). It carries out the reaction 3',5'-cyclic GMP + H2O = GMP + H(+). The catalysed reaction is 3',5'-cyclic UMP + H2O = UMP + H(+). Cyclic nucleotide phosphodiesterase with specificity for the second messengers cAMP and cGMP, which are key regulators of many important physiological processes. Also has activity toward cUMP. Independently of its catalytic activity it is part of an E2/17beta-estradiol-induced pro-apoptotic signaling pathway. E2 stabilizes the PDE3A/SLFN12 complex in the cytosol, promoting the dephosphorylation of SLFN12 and activating its pro-apoptotic ribosomal RNA/rRNA ribonuclease activity. This apoptotic pathway might be relevant in tissues with high concentration of E2 and be for instance involved in placenta remodeling. The sequence is that of cGMP-inhibited 3',5'-cyclic phosphodiesterase 3A from Rattus norvegicus (Rat).